The following is a 333-amino-acid chain: Cytosolic sulfotransferase 10 (333 aa).

76–81 (KSGTTW) is a 3'-phosphoadenylyl sulfate binding site. His-146 serves as the catalytic Proton acceptor. 3'-phosphoadenylyl sulfate is bound by residues Arg-168, Ser-176, Tyr-234, and 299-301 (RKG).

The protein belongs to the sulfotransferase 1 family. In terms of tissue distribution, expressed in roots.

Its subcellular location is the cytoplasm. Its function is as follows. Sulfotransferase that utilizes 3'-phospho-5'-adenylyl sulfate (PAPS) as sulfonate donor to specifically catalyze the sulfate conjugation of brassinosteroids, including castasterone (CS), brassinolide (BL), related 24-epimers, and the naturally occurring (22R, 23R)-28-homobrassinosteroids. No activity on phenolic acids, desulfo-glucosinolates, flavonoids, steroids, gibberellic acids, cytokinins, phenylpropanoids, hydroxyjasmonates and coumarins. This chain is Cytosolic sulfotransferase 10 (SOT10), found in Arabidopsis thaliana (Mouse-ear cress).